Reading from the N-terminus, the 359-residue chain is 3-dehydroquinate synthase (359 aa).

NAD(+) is bound by residues 70–75 (DGEQYK), 105–109 (GVIGD), 129–130 (TT), K142, K151, and 169–172 (FYKT). Positions 184, 247, and 264 each coordinate Zn(2+).

The protein belongs to the sugar phosphate cyclases superfamily. Dehydroquinate synthase family. The cofactor is Co(2+). Zn(2+) serves as cofactor. NAD(+) is required as a cofactor.

Its subcellular location is the cytoplasm. It catalyses the reaction 7-phospho-2-dehydro-3-deoxy-D-arabino-heptonate = 3-dehydroquinate + phosphate. The protein operates within metabolic intermediate biosynthesis; chorismate biosynthesis; chorismate from D-erythrose 4-phosphate and phosphoenolpyruvate: step 2/7. In terms of biological role, catalyzes the conversion of 3-deoxy-D-arabino-heptulosonate 7-phosphate (DAHP) to dehydroquinate (DHQ). In Francisella tularensis subsp. holarctica (strain FTNF002-00 / FTA), this protein is 3-dehydroquinate synthase.